The sequence spans 419 residues: UDP-N-acetylglucosamine 1-carboxyvinyltransferase (419 aa).

22–23 (KN) provides a ligand contact to phosphoenolpyruvate. Arg93 is a binding site for UDP-N-acetyl-alpha-D-glucosamine. The Proton donor role is filled by Cys117. 2-(S-cysteinyl)pyruvic acid O-phosphothioketal is present on Cys117. Residues 122–126 (RPVDQ), Asp305, and Ile327 each bind UDP-N-acetyl-alpha-D-glucosamine.

Belongs to the EPSP synthase family. MurA subfamily.

It localises to the cytoplasm. It catalyses the reaction phosphoenolpyruvate + UDP-N-acetyl-alpha-D-glucosamine = UDP-N-acetyl-3-O-(1-carboxyvinyl)-alpha-D-glucosamine + phosphate. Its pathway is cell wall biogenesis; peptidoglycan biosynthesis. Its function is as follows. Cell wall formation. Adds enolpyruvyl to UDP-N-acetylglucosamine. This is UDP-N-acetylglucosamine 1-carboxyvinyltransferase from Dichelobacter nodosus (strain VCS1703A).